The following is a 109-amino-acid chain: Putative membrane protein insertion efficiency factor (109 aa).

This sequence belongs to the UPF0161 family.

Its subcellular location is the cell inner membrane. In terms of biological role, could be involved in insertion of integral membrane proteins into the membrane. The protein is Putative membrane protein insertion efficiency factor of Rhodopseudomonas palustris (strain BisB18).